Here is a 199-residue protein sequence, read N- to C-terminus: Recombination protein RecR (199 aa).

The C4-type zinc finger occupies 58 to 73 (CSACGNVDTQDPCAIC). Positions 81-176 (HILCIVEEVG…SVSRLAHGVP (96 aa)) constitute a Toprim domain.

It belongs to the RecR family.

In terms of biological role, may play a role in DNA repair. It seems to be involved in an RecBC-independent recombinational process of DNA repair. It may act with RecF and RecO. The polypeptide is Recombination protein RecR (Parvibaculum lavamentivorans (strain DS-1 / DSM 13023 / NCIMB 13966)).